Consider the following 102-residue polypeptide: Protein CASC2, isoform 3 (102 aa).

Expressed in normal and neoplastic endometrial tissues.

In terms of biological role, may act as a potential tumor suppressor. This Homo sapiens (Human) protein is Protein CASC2, isoform 3 (CASC2).